The sequence spans 94 residues: uncharacterized protein (94 aa).

It belongs to the phD/YefM antitoxin family.

This is an uncharacterized protein from Synechocystis sp. (strain ATCC 27184 / PCC 6803 / Kazusa).